Consider the following 185-residue polypeptide: Ribosome-recycling factor (185 aa).

It belongs to the RRF family.

The protein resides in the cytoplasm. In terms of biological role, responsible for the release of ribosomes from messenger RNA at the termination of protein biosynthesis. May increase the efficiency of translation by recycling ribosomes from one round of translation to another. This Pseudomonas putida (strain ATCC 700007 / DSM 6899 / JCM 31910 / BCRC 17059 / LMG 24140 / F1) protein is Ribosome-recycling factor.